A 700-amino-acid polypeptide reads, in one-letter code: Receptor-type tyrosine-protein phosphatase epsilon (700 aa).

The first 19 residues, 1–19 (MEPLCPLLLVGFSLPLARA), serve as a signal peptide directing secretion. At 20 to 46 (LRGNETTADSNETTTTSGPPDPGASQP) the chain is on the extracellular side. 2 N-linked (GlcNAc...) asparagine glycosylation sites follow: asparagine 23 and asparagine 30. Residues 47 to 69 (LLAWLLLPLLLLLLVLLLAAYFF) form a helical membrane-spanning segment. The Cytoplasmic portion of the chain corresponds to 70-700 (RFRKQRKAVV…DIFSDYANFK (631 aa)). Tyrosine-protein phosphatase domains lie at 135-394 (FREE…LLEY) and 426-689 (LEEE…VQDF). Residues aspartate 303, 335–341 (CSAGVGR), and glutamine 379 each bind substrate. Catalysis depends on cysteine 335, which acts as the Phosphocysteine intermediate. Cysteine 630 (phosphocysteine intermediate) is an active-site residue. Tyrosine 696 carries the post-translational modification Phosphotyrosine.

The protein belongs to the protein-tyrosine phosphatase family. Receptor class 4 subfamily. Monomer. Isoform 2: Homodimer. Can form oligomers. Dimerization is increased by oxidative stress and decreased by EGFR. Isoform 2 interacts with GRB2. Post-translationally, a catalytically active cytoplasmic form (p65) is produced by proteolytic cleavage of either isoform 1, isoform 2 or isoform 3. In terms of processing, isoform 1 and isoform 2 are phosphorylated on tyrosine residues by tyrosine kinase Neu. Isoform 1 is glycosylated. In terms of tissue distribution, expressed in giant cell tumor (osteoclastoma rich in multinucleated osteoclastic cells).

It is found in the cell membrane. The protein resides in the cytoplasm. It catalyses the reaction O-phospho-L-tyrosyl-[protein] + H2O = L-tyrosyl-[protein] + phosphate. In terms of biological role, isoform 1 plays a critical role in signaling transduction pathways and phosphoprotein network topology in red blood cells. May play a role in osteoclast formation and function. Functionally, isoform 2 acts as a negative regulator of insulin receptor (IR) signaling in skeletal muscle. Regulates insulin-induced tyrosine phosphorylation of insulin receptor (IR) and insulin receptor substrate 1 (IRS-1), phosphorylation of protein kinase B and glycogen synthase kinase-3 and insulin induced stimulation of glucose uptake. Its function is as follows. Isoform 1 and isoform 2 act as a negative regulator of FceRI-mediated signal transduction leading to cytokine production and degranulation, most likely by acting at the level of SYK to affect downstream events such as phosphorylation of SLP76 and LAT and mobilization of Ca(2+). The polypeptide is Receptor-type tyrosine-protein phosphatase epsilon (PTPRE) (Homo sapiens (Human)).